A 729-amino-acid polypeptide reads, in one-letter code: Phosphoribosylformylglycinamidine synthase subunit PurL (729 aa).

The active site involves H54. Y57 and K96 together coordinate ATP. E98 is a binding site for Mg(2+). Residues 99-102 (SHNH) and R121 each bind substrate. H100 functions as the Proton acceptor in the catalytic mechanism. D122 provides a ligand contact to Mg(2+). Q245 lines the substrate pocket. Mg(2+) is bound at residue D273. Residue 317–319 (ETQ) coordinates substrate. ATP is bound by residues D495 and G532. N533 contributes to the Mg(2+) binding site. Substrate is bound at residue S535.

This sequence belongs to the FGAMS family. As to quaternary structure, monomer. Part of the FGAM synthase complex composed of 1 PurL, 1 PurQ and 2 PurS subunits.

The protein localises to the cytoplasm. The catalysed reaction is N(2)-formyl-N(1)-(5-phospho-beta-D-ribosyl)glycinamide + L-glutamine + ATP + H2O = 2-formamido-N(1)-(5-O-phospho-beta-D-ribosyl)acetamidine + L-glutamate + ADP + phosphate + H(+). The protein operates within purine metabolism; IMP biosynthesis via de novo pathway; 5-amino-1-(5-phospho-D-ribosyl)imidazole from N(2)-formyl-N(1)-(5-phospho-D-ribosyl)glycinamide: step 1/2. In terms of biological role, part of the phosphoribosylformylglycinamidine synthase complex involved in the purines biosynthetic pathway. Catalyzes the ATP-dependent conversion of formylglycinamide ribonucleotide (FGAR) and glutamine to yield formylglycinamidine ribonucleotide (FGAM) and glutamate. The FGAM synthase complex is composed of three subunits. PurQ produces an ammonia molecule by converting glutamine to glutamate. PurL transfers the ammonia molecule to FGAR to form FGAM in an ATP-dependent manner. PurS interacts with PurQ and PurL and is thought to assist in the transfer of the ammonia molecule from PurQ to PurL. This is Phosphoribosylformylglycinamidine synthase subunit PurL from Staphylococcus saprophyticus subsp. saprophyticus (strain ATCC 15305 / DSM 20229 / NCIMB 8711 / NCTC 7292 / S-41).